A 91-amino-acid polypeptide reads, in one-letter code: Defensin-like protein 220 (91 aa).

Residues 1-19 form the signal peptide; that stretch reads MKTIFFFITFIVLVSSCTS. 3 disulfide bridges follow: C61-C78, C64-C83, and C68-C85.

It belongs to the DEFL family.

The protein localises to the secreted. This chain is Defensin-like protein 220, found in Arabidopsis thaliana (Mouse-ear cress).